Consider the following 245-residue polypeptide: Ureidoacrylate amidohydrolase RutB (245 aa).

Asp38 (proton acceptor) is an active-site residue. Lys147 is an active-site residue. Cys180 serves as the catalytic Nucleophile.

Belongs to the isochorismatase family. RutB subfamily.

The catalysed reaction is (Z)-3-ureidoacrylate + H2O + H(+) = (Z)-3-aminoacrylate + NH4(+) + CO2. The enzyme catalyses (Z)-3-ureidoacrylate + H2O = (Z)-3-aminoacrylate + carbamate + H(+). It carries out the reaction (Z)-2-methylureidoacrylate + H2O + H(+) = (Z)-2-methylaminoacrylate + NH4(+) + CO2. Functionally, hydrolyzes ureidoacrylate to form aminoacrylate and carbamate. The carbamate hydrolyzes spontaneously, thereby releasing one of the nitrogen atoms of the pyrimidine ring as ammonia and one of its carbon atoms as CO2. This Acinetobacter baylyi (strain ATCC 33305 / BD413 / ADP1) protein is Ureidoacrylate amidohydrolase RutB.